Reading from the N-terminus, the 95-residue chain is Large ribosomal subunit protein bL25 (95 aa).

The protein belongs to the bacterial ribosomal protein bL25 family. Part of the 50S ribosomal subunit; part of the 5S rRNA/L5/L18/L25 subcomplex. Contacts the 5S rRNA. Binds to the 5S rRNA independently of L5 and L18.

Functionally, this is one of the proteins that binds to the 5S RNA in the ribosome where it forms part of the central protuberance. The sequence is that of Large ribosomal subunit protein bL25 from Shewanella pealeana (strain ATCC 700345 / ANG-SQ1).